The sequence spans 678 residues: Methionine--tRNA ligase (678 aa).

Residues 12 to 22 (PYANGPIHLGH) carry the 'HIGH' region motif. Positions 143, 146, 156, and 159 each coordinate Zn(2+). A 'KMSKS' region motif is present at residues 328-332 (KMSKS). Lys331 provides a ligand contact to ATP. The region spanning 577–678 (DFSKVDLRIA…SGAQPGMRVK (102 aa)) is the tRNA-binding domain.

The protein belongs to the class-I aminoacyl-tRNA synthetase family. MetG type 1 subfamily. Homodimer. The cofactor is Zn(2+).

The protein resides in the cytoplasm. It catalyses the reaction tRNA(Met) + L-methionine + ATP = L-methionyl-tRNA(Met) + AMP + diphosphate. Functionally, is required not only for elongation of protein synthesis but also for the initiation of all mRNA translation through initiator tRNA(fMet) aminoacylation. This chain is Methionine--tRNA ligase, found in Acidithiobacillus ferrooxidans (strain ATCC 23270 / DSM 14882 / CIP 104768 / NCIMB 8455) (Ferrobacillus ferrooxidans (strain ATCC 23270)).